A 231-amino-acid polypeptide reads, in one-letter code: Protein OPG061 (231 aa).

Belongs to the orthopoxvirus OPG058 family.

It localises to the host nucleus. Its subcellular location is the host nucleolus. The polypeptide is Protein OPG061 (OPG061) (Cynomys gunnisoni (Gunnison's prairie dog)).